A 341-amino-acid chain; its full sequence is Inner membrane ABC transporter permease protein YejE (341 aa).

The Cytoplasmic segment spans residues 1-21 (MSRLSPVNQARWARFRHNRRG). The helical transmembrane segment at 22–42 (YWSLWIFLVLFGLSLCSELIA) threads the bilayer. The Periplasmic portion of the chain corresponds to 43–143 (NDKPLLVRYD…ARILYGTRIS (101 aa)). The region spanning 140 to 332 (TRISVLFGLM…LLIFIGEAVR (193 aa)) is the ABC transmembrane type-1 domain. Residues 144 to 164 (VLFGLMLTLCSSVMGVLAGAL) form a helical membrane-spanning segment. Over 165–178 (QGYYGGKVDLWGQR) the chain is Cytoplasmic. A helical membrane pass occupies residues 179-199 (FIEVWSGMPTLFLIILLSSVV). Topologically, residues 200-201 (QP) are periplasmic. The helical transmembrane segment at 202 to 222 (NFWWLLAITVLFGWMSLVGVV) threads the bilayer. The Cytoplasmic segment spans residues 223–252 (RAEFLRTRNFDYIRAAQALGVSDRSIILRH). The chain crosses the membrane as a helical span at residues 253–273 (MLPNAMVATLTFLPFILCSSI). The Periplasmic segment spans residues 274 to 307 (TTLTSLDFLGFGLPLGSPSLGELLLQGKNNLQAP). Residues 308 to 328 (WLGITAFLSVAILLSLLIFIG) traverse the membrane as a helical segment. At 329–341 (EAVRDAFDPNKAV) the chain is on the cytoplasmic side.

This sequence belongs to the binding-protein-dependent transport system permease family. OppBC subfamily.

The protein localises to the cell inner membrane. In terms of biological role, probably part of a binding-protein-dependent transport system. Probably responsible for the translocation of the substrate across the membrane. The sequence is that of Inner membrane ABC transporter permease protein YejE (yejE) from Escherichia coli (strain K12).